The primary structure comprises 292 residues: 4-hydroxy-tetrahydrodipicolinate synthase (292 aa).

T45 contributes to the pyruvate binding site. Y133 acts as the Proton donor/acceptor in catalysis. K161 functions as the Schiff-base intermediate with substrate in the catalytic mechanism. I203 contacts pyruvate.

It belongs to the DapA family. In terms of assembly, homodimer.

The protein localises to the cytoplasm. It catalyses the reaction L-aspartate 4-semialdehyde + pyruvate = (2S,4S)-4-hydroxy-2,3,4,5-tetrahydrodipicolinate + H2O + H(+). It functions in the pathway amino-acid biosynthesis; L-lysine biosynthesis via DAP pathway; (S)-tetrahydrodipicolinate from L-aspartate: step 3/4. In terms of biological role, catalyzes the condensation of (S)-aspartate-beta-semialdehyde [(S)-ASA] and pyruvate to 4-hydroxy-tetrahydrodipicolinate (HTPA). The sequence is that of 4-hydroxy-tetrahydrodipicolinate synthase from Pseudomonas putida (strain W619).